The sequence spans 227 residues: Ribosomal RNA small subunit methyltransferase G (227 aa).

Residues Gly69, Phe74, 119–120 (VE), and Arg134 each bind S-adenosyl-L-methionine.

The protein belongs to the methyltransferase superfamily. RNA methyltransferase RsmG family.

The protein localises to the cytoplasm. Its function is as follows. Specifically methylates the N7 position of a guanine in 16S rRNA. The sequence is that of Ribosomal RNA small subunit methyltransferase G from Mycoplasmopsis pulmonis (strain UAB CTIP) (Mycoplasma pulmonis).